Consider the following 345-residue polypeptide: Small ribosomal subunit biogenesis GTPase RsgA (345 aa).

The segment at 1-36 (MSKNKLSKGQERRVQANHQRRLQQRERGAAHWDDQP) is disordered. Residues 23 to 34 (QQRERGAAHWDD) are compositionally biased toward basic and acidic residues. The region spanning 103–273 (RSVLTRPDVY…LIDSPGVREL (171 aa)) is the CP-type G domain. GTP is bound by residues 159–162 (NKID) and 213–221 (GQSGVGKSS). Residues cysteine 297, cysteine 302, histidine 304, and cysteine 310 each contribute to the Zn(2+) site.

This sequence belongs to the TRAFAC class YlqF/YawG GTPase family. RsgA subfamily. In terms of assembly, monomer. Associates with 30S ribosomal subunit, binds 16S rRNA. It depends on Zn(2+) as a cofactor.

The protein resides in the cytoplasm. In terms of biological role, one of several proteins that assist in the late maturation steps of the functional core of the 30S ribosomal subunit. Helps release RbfA from mature subunits. May play a role in the assembly of ribosomal proteins into the subunit. Circularly permuted GTPase that catalyzes slow GTP hydrolysis, GTPase activity is stimulated by the 30S ribosomal subunit. The chain is Small ribosomal subunit biogenesis GTPase RsgA from Sodalis glossinidius (strain morsitans).